The chain runs to 527 residues: Lysine--tRNA ligase (527 aa).

The 'HIGH' region motif lies at 44–52; the sequence is PSGLPHIGT. Residues 290-294 carry the 'KMSKS' region motif; the sequence is KISKS. Lysine 293 is a binding site for ATP.

Belongs to the class-I aminoacyl-tRNA synthetase family.

Its subcellular location is the cytoplasm. It catalyses the reaction tRNA(Lys) + L-lysine + ATP = L-lysyl-tRNA(Lys) + AMP + diphosphate. In Roseobacter denitrificans (strain ATCC 33942 / OCh 114) (Erythrobacter sp. (strain OCh 114)), this protein is Lysine--tRNA ligase.